The sequence spans 708 residues: Metal-pseudopaline receptor CntO (708 aa).

Positions Met1–Trp21 are cleaved as a signal peptide. Residues Arg63–Lys169 form the TBDR plug domain. The 535-residue stretch at Glu174–Tyr708 folds into the TBDR beta-barrel domain.

This sequence belongs to the TonB-dependent receptor family.

It is found in the cell outer membrane. In terms of biological role, transports the metallophore pseudopaline, which is involved in the acquisition of nickel and zinc, and thus enables bacterial growth inside the host, where metal access is limited. Is probably involved in the import of pseudopaline-metal complexes. The protein is Metal-pseudopaline receptor CntO of Pseudomonas aeruginosa (strain UCBPP-PA14).